The primary structure comprises 599 residues: Endo-1,4-beta-xylanase B (599 aa).

Residues 1–37 (MTISASDYRHPGNFLKRTTALLCVGTALTALAFNASA) form the signal peptide. Residues 38-136 (ACTYTIDSEW…TVTGAACNSA (99 aa)) enclose the CBM2 domain. A disulfide bond links cysteine 39 and cysteine 133. Residues 163–289 (LLQEAQAGFC…LPNIDSLSVV (127 aa)) form the CBM6 domain. A GH10 domain is found at 315–595 (SSSAASAKKF…RPAMTWLINN (281 aa)). The Proton donor role is filled by glutamate 431. Glutamate 530 functions as the Nucleophile in the catalytic mechanism.

The protein belongs to the glycosyl hydrolase 10 (cellulase F) family.

It catalyses the reaction Endohydrolysis of (1-&gt;4)-beta-D-xylosidic linkages in xylans.. It functions in the pathway glycan metabolism; hemicellulose degradation. Xylanase B contributes to hydrolyze hemicellulose, the major component of plant cell-walls. The protein is Endo-1,4-beta-xylanase B (xynB) of Cellvibrio japonicus (strain Ueda107) (Pseudomonas fluorescens subsp. cellulosa).